A 133-amino-acid chain; its full sequence is Phosphoribosyl-AMP cyclohydrolase (133 aa).

Mg(2+) is bound at residue Asp77. Cys78 is a binding site for Zn(2+). Mg(2+) is bound by residues Asp79 and Asp81. Residues Cys95 and Cys102 each coordinate Zn(2+).

The protein belongs to the PRA-CH family. In terms of assembly, homodimer. It depends on Mg(2+) as a cofactor. Zn(2+) is required as a cofactor.

The protein localises to the cytoplasm. The catalysed reaction is 1-(5-phospho-beta-D-ribosyl)-5'-AMP + H2O = 1-(5-phospho-beta-D-ribosyl)-5-[(5-phospho-beta-D-ribosylamino)methylideneamino]imidazole-4-carboxamide. Its pathway is amino-acid biosynthesis; L-histidine biosynthesis; L-histidine from 5-phospho-alpha-D-ribose 1-diphosphate: step 3/9. In terms of biological role, catalyzes the hydrolysis of the adenine ring of phosphoribosyl-AMP. This is Phosphoribosyl-AMP cyclohydrolase from Azotobacter vinelandii (strain DJ / ATCC BAA-1303).